We begin with the raw amino-acid sequence, 155 residues long: uncharacterized protein (155 aa).

Residues 4 to 65 (IDEIDEIIVR…VVDTSFFGEF (62 aa)) form the HTH asnC-type domain. The H-T-H motif DNA-binding region spans 23–42 (LTELGKKVGLTASAVKNRIE).

This is an uncharacterized protein from Pyrococcus abyssi (strain GE5 / Orsay).